The primary structure comprises 97 residues: Co-chaperonin GroES (97 aa).

Belongs to the GroES chaperonin family. Heptamer of 7 subunits arranged in a ring. Interacts with the chaperonin GroEL.

It localises to the cytoplasm. Together with the chaperonin GroEL, plays an essential role in assisting protein folding. The GroEL-GroES system forms a nano-cage that allows encapsulation of the non-native substrate proteins and provides a physical environment optimized to promote and accelerate protein folding. GroES binds to the apical surface of the GroEL ring, thereby capping the opening of the GroEL channel. The sequence is that of Co-chaperonin GroES from Photorhabdus laumondii subsp. laumondii (strain DSM 15139 / CIP 105565 / TT01) (Photorhabdus luminescens subsp. laumondii).